The chain runs to 342 residues: Terpene cyclase resF (342 aa).

The next 5 membrane-spanning stretches (helical) occupy residues 5–25, 81–101, 115–135, 151–171, and 182–202; these read VSVVFVSLIIAAAVGVWGVFA, FMAQLLANVFAIPIVLLTEDF, WGVFSQLATSAVMCPLYGVCF, STWIVLISVLIGYGAPAMLIF, and IWGVLAFTVYPLYVCLTASLL. N-linked (GlcNAc...) asparagine glycosylation is present at asparagine 224. 3 helical membrane passes run 229–249, 269–289, and 305–325; these read YVVAGIVGVAGHLSYIGFHLG, FLQIDYVITFAAMLTLAWHEL, and YLLLGWLFIGPGATLAAAWAL.

It belongs to the membrane-bound ascI terpene cyclase family.

The protein resides in the membrane. It participates in antifungal biosynthesis. Cyclase; part of the gene cluster that mediates the biosynthesis of the tetrahydropyranyl antifungal agent restricticin that acts as an inhibitor of CYP51 and blocks the ergosterol biosynthesis. The highly reducing polyketide synthase resH, the short chain dehydrogenase resG, the cyclase resF, the FAD-dependent monooxygenase resA and the enoylreductase resD are required to generate the first stable intermediate desmethylrestrictinol. ResH with resD biosynthesize the first polyketide chain intermediate that is reduced by resG, followed by epoxidation by resA before 6-endo cyclization via epoxide opening by resF leads to desmethylrestrictinol. The methyltransferase resE then catalyzes the C4 O-methylation of desmethylrestrictinol to produce restrictinol, and the nonribosomal peptide synthetase resC catalyzes the C3 esterification of restrictinol with glycine that leads to restricticin. In Aspergillus sclerotiorum, this protein is Terpene cyclase resF.